Consider the following 616-residue polypeptide: MSSSITDEKISGEQQQPAGRKLYYNTSTFAEPPLVDGEGNPINYEPEVYNPDHEKLYHNPSLPAQSIQDTRDDELLERVYSQDQGVEYEEDEEDKPNLSAASIKSYALTRFTSLLHIHEFSWENVNPIPELRKMTWQNWNYFFMGYFAWLSAAWAFFCVSVSVAPLAELYDRPTKDITWGLGLVLFVRSAGAVIFGLWTDKSSRKWPYITCLFLFVIAQLCTPWCDTYEKFLGVRWITGIAMGGIYGCASATAIEDAPVKARSFLSGLFFSAYAMGFIFAIIFYRAFGYFRDDGWKILFWFSIFLPILLIFWRLLWPETKYFTKVLKARKLILSDAVKANGGEPLPKANFKQKMVSMKRTVQKYWLLFAYLVVLLVGPNYLTHASQDLLPTMLRAQLGLSKDAVTVIVVVTNIGAICGGMIFGQFMEVTGRRLGLLIACTMGGCFTYPAFMLRSEKAILGAGFMLYFCVFGVWGILPIHLAELAPADARALVAGLSYQLGNLASAAASTIETQLADRYPLERDASGAVIKEDYAKVMAILTGSVFIFTFACVFVGHEKFHRDLSSPVMKKYINQVEEYEADGLSISDIVEQKTECASVKMIDSNVSKTYEEHIETV.

The span at 1 to 11 (MSSSITDEKIS) shows a compositional bias: basic and acidic residues. Positions 1–65 (MSSSITDEKI…LYHNPSLPAQ (65 aa)) are disordered. N-acetylserine is present on Ser2. At 2–140 (SSSITDEKIS…LRKMTWQNWN (139 aa)) the chain is on the cytoplasmic side. At Ser4 the chain carries Phosphoserine. Residue Lys9 forms a Glycyl lysine isopeptide (Lys-Gly) (interchain with G-Cter in ubiquitin) linkage. 3 positions are modified to phosphoserine: Ser11, Ser61, and Ser66. Position 70 is a phosphothreonine (Thr70). Residues 141–161 (YFFMGYFAWLSAAWAFFCVSV) traverse the membrane as a helical segment. The Extracellular portion of the chain corresponds to 162–176 (SVAPLAELYDRPTKD). Residues 177–197 (ITWGLGLVLFVRSAGAVIFGL) form a helical membrane-spanning segment. At 198 to 205 (WTDKSSRK) the chain is on the cytoplasmic side. Residues 206-226 (WPYITCLFLFVIAQLCTPWCD) form a helical membrane-spanning segment. Topologically, residues 227 to 230 (TYEK) are extracellular. The helical transmembrane segment at 231-251 (FLGVRWITGIAMGGIYGCASA) threads the bilayer. Over 252–263 (TAIEDAPVKARS) the chain is Cytoplasmic. A helical transmembrane segment spans residues 264-284 (FLSGLFFSAYAMGFIFAIIFY). At 285–296 (RAFGYFRDDGWK) the chain is on the extracellular side. The chain crosses the membrane as a helical span at residues 297–317 (ILFWFSIFLPILLIFWRLLWP). Residues 318 to 363 (ETKYFTKVLKARKLILSDAVKANGGEPLPKANFKQKMVSMKRTVQK) are Cytoplasmic-facing. A Glycyl lysine isopeptide (Lys-Gly) (interchain with G-Cter in ubiquitin) cross-link involves residue Lys338. Residues 364 to 384 (YWLLFAYLVVLLVGPNYLTHA) form a helical membrane-spanning segment. Residues 385–402 (SQDLLPTMLRAQLGLSKD) are Extracellular-facing. Residues 403 to 423 (AVTVIVVVTNIGAICGGMIFG) traverse the membrane as a helical segment. The Cytoplasmic segment spans residues 424–432 (QFMEVTGRR). The chain crosses the membrane as a helical span at residues 433-453 (LGLLIACTMGGCFTYPAFMLR). The Extracellular portion of the chain corresponds to 454–457 (SEKA). A helical membrane pass occupies residues 458-478 (ILGAGFMLYFCVFGVWGILPI). Residues 479 to 489 (HLAELAPADAR) lie on the Cytoplasmic side of the membrane. Residues 490-510 (ALVAGLSYQLGNLASAAASTI) traverse the membrane as a helical segment. Over 511–535 (ETQLADRYPLERDASGAVIKEDYAK) the chain is Extracellular. Residues 536–556 (VMAILTGSVFIFTFACVFVGH) traverse the membrane as a helical segment. The Cytoplasmic portion of the chain corresponds to 557–616 (EKFHRDLSSPVMKKYINQVEEYEADGLSISDIVEQKTECASVKMIDSNVSKTYEEHIETV). Phosphoserine occurs at positions 584, 603, and 606.

The protein belongs to the major facilitator superfamily. Sugar transporter (TC 2.A.1.1) family.

The protein localises to the membrane. Functionally, essential to lactate transport. The protein is Carboxylic acid transporter protein homolog (JEN1) of Saccharomyces cerevisiae (strain ATCC 204508 / S288c) (Baker's yeast).